A 428-amino-acid polypeptide reads, in one-letter code: Serine--tRNA ligase (428 aa).

L-serine is bound at residue 235-237 (TAE). ATP is bound at residue 266-268 (RSE). Glu-289 serves as a coordination point for L-serine. An ATP-binding site is contributed by 353–356 (EISS). Residue Ser-389 coordinates L-serine.

It belongs to the class-II aminoacyl-tRNA synthetase family. Type-1 seryl-tRNA synthetase subfamily. In terms of assembly, homodimer. The tRNA molecule binds across the dimer.

The protein resides in the cytoplasm. It carries out the reaction tRNA(Ser) + L-serine + ATP = L-seryl-tRNA(Ser) + AMP + diphosphate + H(+). The enzyme catalyses tRNA(Sec) + L-serine + ATP = L-seryl-tRNA(Sec) + AMP + diphosphate + H(+). Its pathway is aminoacyl-tRNA biosynthesis; selenocysteinyl-tRNA(Sec) biosynthesis; L-seryl-tRNA(Sec) from L-serine and tRNA(Sec): step 1/1. Catalyzes the attachment of serine to tRNA(Ser). Is also able to aminoacylate tRNA(Sec) with serine, to form the misacylated tRNA L-seryl-tRNA(Sec), which will be further converted into selenocysteinyl-tRNA(Sec). The chain is Serine--tRNA ligase from Shewanella baltica (strain OS155 / ATCC BAA-1091).